The primary structure comprises 203 residues: Holliday junction branch migration complex subunit RuvA (203 aa).

Positions Met1 to Asn64 are domain I. Residues Asn65–Pro142 form a domain II region. The flexible linker stretch occupies residues Ala143 to Pro154. The segment at Thr155–Leu203 is domain III.

This sequence belongs to the RuvA family. As to quaternary structure, homotetramer. Forms an RuvA(8)-RuvB(12)-Holliday junction (HJ) complex. HJ DNA is sandwiched between 2 RuvA tetramers; dsDNA enters through RuvA and exits via RuvB. An RuvB hexamer assembles on each DNA strand where it exits the tetramer. Each RuvB hexamer is contacted by two RuvA subunits (via domain III) on 2 adjacent RuvB subunits; this complex drives branch migration. In the full resolvosome a probable DNA-RuvA(4)-RuvB(12)-RuvC(2) complex forms which resolves the HJ.

The protein localises to the cytoplasm. In terms of biological role, the RuvA-RuvB-RuvC complex processes Holliday junction (HJ) DNA during genetic recombination and DNA repair, while the RuvA-RuvB complex plays an important role in the rescue of blocked DNA replication forks via replication fork reversal (RFR). RuvA specifically binds to HJ cruciform DNA, conferring on it an open structure. The RuvB hexamer acts as an ATP-dependent pump, pulling dsDNA into and through the RuvAB complex. HJ branch migration allows RuvC to scan DNA until it finds its consensus sequence, where it cleaves and resolves the cruciform DNA. The chain is Holliday junction branch migration complex subunit RuvA from Salmonella choleraesuis (strain SC-B67).